A 195-amino-acid polypeptide reads, in one-letter code: uncharacterized protein (195 aa).

4 consecutive transmembrane segments (helical) span residues serine 89–proline 106, histidine 111–arginine 128, valine 149–leucine 168, and leucine 172–isoleucine 194.

The protein localises to the cell membrane. This is an uncharacterized protein from Bacillus subtilis (strain 168).